The sequence spans 832 residues: Subtilisin-like protease SBT2.1 (832 aa).

The N-terminal stretch at 1–24 (MDESSLVRFVFLLCLVSSSVFCLA) is a signal peptide. Residues 25–138 (ESDQNATVSS…VVLDFLVEKA (114 aa)) constitute a propeptide, activation peptide. N-linked (GlcNAc...) asparagine glycans are attached at residues asparagine 29 and asparagine 73. The Inhibitor I9 domain occupies 36–136 (VYIVTLKDRP…ENVVLDFLVE (101 aa)). The Peptidase S8 domain maps to 145 to 684 (FLGLPRGAWL…SGFVNATAAL (540 aa)). Catalysis depends on aspartate 172, which acts as the Charge relay system. An N-linked (GlcNAc...) asparagine glycan is attached at asparagine 233. The active-site Charge relay system is histidine 247. Asparagine 272, asparagine 315, asparagine 390, asparagine 417, asparagine 470, asparagine 515, and asparagine 522 each carry an N-linked (GlcNAc...) asparagine glycan. In terms of domain architecture, PA spans 408-503 (LVLATHALRN…MDIPGILISS (96 aa)). Serine 609 functions as the Charge relay system in the catalytic mechanism. N-linked (GlcNAc...) asparagine glycans are attached at residues asparagine 679, asparagine 705, asparagine 713, asparagine 723, asparagine 760, and asparagine 801.

Belongs to the peptidase S8 family.

It localises to the secreted. This is Subtilisin-like protease SBT2.1 from Arabidopsis thaliana (Mouse-ear cress).